Consider the following 132-residue polypeptide: Small ribosomal subunit protein uS11 (132 aa).

Residues 108–132 (GRIEDVTPVPHDSCRPKGGRRGRRV) form a disordered region.

This sequence belongs to the universal ribosomal protein uS11 family. As to quaternary structure, part of the 30S ribosomal subunit.

Located on the platform of the 30S subunit. The protein is Small ribosomal subunit protein uS11 of Methanoregula boonei (strain DSM 21154 / JCM 14090 / 6A8).